The sequence spans 354 residues: MATTAASSLLKSSFAGSRLPSATRTTTPSSVAVATPRAGGGPIRASISSPNPPYDLTSFRFSPIKESIVSREMTRRYMTDMITHADTDVVIVGAGSAGLSCAYELSKDPTVSVAIVEQSVSPGGGAWLGGQLFSAMVVRRPAHLFLDELGVGYDEAEDYVVVKHAALFTSTVMSRLLARPNVKLFNAVAVEDLIVRRGRVGGVVTNWALVSMNHDTQSCMDPNVMEAKVVVSSCGHDGPFGATGVKRLQDIGMISAVPGMKALDMNAAEDEIVRLTREVVPGMIVTGMEVAEIDGAPRMGPTFGAMMISGQKAAHLALKALGRPNAVDGTIPEVSPALREEFVIASKDDEVVDA.

The N-terminal 44 residues, 1 to 44, are a transit peptide targeting the chloroplast; sequence MATTAASSLLKSSFAGSRLPSATRTTTPSSVAVATPRAGGGPIR. Residues 17-49 are disordered; sequence SRLPSATRTTTPSSVAVATPRAGGGPIRASISS. Over residues 20–32 the composition is skewed to polar residues; sequence PSATRTTTPSSVA. Residues Ala97, 117–118, Gly125, and Val190 each bind substrate; that span reads EQ. 2,3-didehydroalanine (Cys) is present on Cys219. Residues Asp221, His236, Met288, and 298 to 300 each bind substrate; that span reads RMG.

The protein belongs to the THI4 family. In terms of assembly, homooctamer. Fe cation serves as cofactor. During the catalytic reaction, a sulfide is transferred from Cys-219 to a reaction intermediate, generating a dehydroalanine residue. Highest expression in developing embryos and green leaves and a very low level expression seen in endosperm, roots, etiolated shoots and immature ears.

It is found in the plastid. It localises to the chloroplast. It carries out the reaction [ADP-thiazole synthase]-L-cysteine + glycine + NAD(+) = [ADP-thiazole synthase]-dehydroalanine + ADP-5-ethyl-4-methylthiazole-2-carboxylate + nicotinamide + 3 H2O + 2 H(+). In terms of biological role, involved in biosynthesis of the thiamine precursor thiazole. Catalyzes the conversion of NAD and glycine to adenosine diphosphate 5-(2-hydroxyethyl)-4-methylthiazole-2-carboxylic acid (ADT), an adenylated thiazole intermediate. The reaction includes an iron-dependent sulfide transfer from a conserved cysteine residue of the protein to a thiazole intermediate. The enzyme can only undergo a single turnover, which suggests it is a suicide enzyme. May have additional roles in adaptation to various stress conditions and in DNA damage tolerance. The polypeptide is Thiamine thiazole synthase 2, chloroplastic (Zea mays (Maize)).